We begin with the raw amino-acid sequence, 247 residues long: Chymase (247 aa).

The first 19 residues, 1–19 (MLLLPLPLLLFFLCSRAEA), serve as a signal peptide directing secretion. A propeptide spans 20–21 (GE) (activation peptide). Residues 22 to 245 (IIGGTECKPH…YRPWINKILQ (224 aa)) enclose the Peptidase S1 domain. A disulfide bridge connects residues Cys-51 and Cys-67. The Charge relay system role is filled by His-66. N-linked (GlcNAc...) asparagine glycans are attached at residues Asn-80 and Asn-103. Asp-110 serves as the catalytic Charge relay system. 2 disulfides stabilise this stretch: Cys-144-Cys-209 and Cys-175-Cys-188. Ser-203 (charge relay system) is an active-site residue.

This sequence belongs to the peptidase S1 family. Granzyme subfamily.

The protein localises to the secreted. Its subcellular location is the cytoplasmic granule. The enzyme catalyses Preferential cleavage: Phe-|-Xaa &gt; Tyr-|-Xaa &gt; Trp-|-Xaa &gt; Leu-|-Xaa.. In terms of biological role, major secreted protease of mast cells with suspected roles in vasoactive peptide generation, extracellular matrix degradation, and regulation of gland secretion. The chain is Chymase (CMA1) from Macaca fascicularis (Crab-eating macaque).